A 247-amino-acid polypeptide reads, in one-letter code: ATP synthase subunit a, chloroplastic (247 aa).

The next 5 membrane-spanning stretches (helical) occupy residues 38–58 (QVLI…IIAV), 95–115 (VPFI…GALL), 134–154 (INTT…AGLT), 199–219 (LVVV…VMFL), and 220–240 (GLFT…AYIG).

The protein belongs to the ATPase A chain family. F-type ATPases have 2 components, CF(1) - the catalytic core - and CF(0) - the membrane proton channel. CF(1) has five subunits: alpha(3), beta(3), gamma(1), delta(1), epsilon(1). CF(0) has four main subunits: a, b, b' and c.

The protein localises to the plastid. It is found in the chloroplast thylakoid membrane. In terms of biological role, key component of the proton channel; it plays a direct role in the translocation of protons across the membrane. This Morus indica (Mulberry) protein is ATP synthase subunit a, chloroplastic.